We begin with the raw amino-acid sequence, 397 residues long: Tryptophan synthase beta chain (397 aa).

An N6-(pyridoxal phosphate)lysine modification is found at Lys87.

Belongs to the TrpB family. As to quaternary structure, tetramer of two alpha and two beta chains. It depends on pyridoxal 5'-phosphate as a cofactor.

It catalyses the reaction (1S,2R)-1-C-(indol-3-yl)glycerol 3-phosphate + L-serine = D-glyceraldehyde 3-phosphate + L-tryptophan + H2O. It participates in amino-acid biosynthesis; L-tryptophan biosynthesis; L-tryptophan from chorismate: step 5/5. Functionally, the beta subunit is responsible for the synthesis of L-tryptophan from indole and L-serine. In Enterobacter sp. (strain 638), this protein is Tryptophan synthase beta chain.